A 171-amino-acid chain; its full sequence is Co-chaperone protein HscB homolog (171 aa).

In terms of domain architecture, J spans asparagine 2–leucine 69.

This sequence belongs to the HscB family. In terms of assembly, interacts with HscA and stimulates its ATPase activity.

Its function is as follows. Co-chaperone involved in the maturation of iron-sulfur cluster-containing proteins. Seems to help targeting proteins to be folded toward HscA. The protein is Co-chaperone protein HscB homolog of Acinetobacter baylyi (strain ATCC 33305 / BD413 / ADP1).